Consider the following 540-residue polypeptide: SNW/SKI-interacting protein B (540 aa).

4 disordered regions span residues 1-106 (MVLR…SLTV), 215-273 (GETQ…NPKG), 351-402 (GAAP…RDRD), and 502-526 (ASVA…DPFH). Composition is skewed to basic and acidic residues over residues 16-29 (PHDH…KERY) and 83-94 (MGRRGGDGDGEQ). Positions 189–353 (PEFIKYTPAR…KARAEMLGAA (165 aa)) are SNW. The span at 236 to 251 (AGSPPVPVLRSPPRPP) shows a compositional bias: pro residues. The segment covering 359 to 382 (ERSKAAAERDAIREERRRERRLEA) has biased composition (basic and acidic residues). A compositionally biased stretch (low complexity) spans 383 to 393 (RAAAAAASKKS).

The protein belongs to the SNW family.

Its subcellular location is the nucleus. The sequence is that of SNW/SKI-interacting protein B from Oryza sativa subsp. japonica (Rice).